The following is a 104-amino-acid chain: MAAKIRRDDEVIVLTGKDKGKRGKVKNVLSSGKVIVEGINLVKKHQKPVPALNQPGGIVEKEAAIQVSNLALFNATTGKADRVGFRFEDGKKVRFFKSTSETIK.

The protein belongs to the universal ribosomal protein uL24 family. Part of the 50S ribosomal subunit.

In terms of biological role, one of two assembly initiator proteins, it binds directly to the 5'-end of the 23S rRNA, where it nucleates assembly of the 50S subunit. One of the proteins that surrounds the polypeptide exit tunnel on the outside of the subunit. The sequence is that of Large ribosomal subunit protein uL24 from Yersinia pseudotuberculosis serotype O:1b (strain IP 31758).